The following is a 281-amino-acid chain: Auxin-responsive protein IAA19 (281 aa).

The short motif at leucine 40 to leucine 44 is the EAR-like (transcriptional repression) element. The tract at residues leucine 66–alanine 126 is disordered. The span at glycine 79–arginine 91 shows a compositional bias: basic and acidic residues. A compositionally biased stretch (low complexity) spans glycine 114–alanine 126. A PB1 domain is found at cysteine 161–aspartate 265.

Belongs to the Aux/IAA family. As to quaternary structure, homodimers and heterodimers. In terms of tissue distribution, expressed in etiolated seedlings and flowers.

It localises to the nucleus. Aux/IAA proteins are short-lived transcriptional factors that function as repressors of early auxin response genes at low auxin concentrations. This chain is Auxin-responsive protein IAA19 (IAA19), found in Oryza sativa subsp. japonica (Rice).